The following is a 429-amino-acid chain: Trigger factor (429 aa).

One can recognise a PPIase FKBP-type domain in the interval 162-247; it reads DDTVDLAFEG…INAIKKLRQP (86 aa).

It belongs to the FKBP-type PPIase family. Tig subfamily.

It is found in the cytoplasm. The enzyme catalyses [protein]-peptidylproline (omega=180) = [protein]-peptidylproline (omega=0). Functionally, involved in protein export. Acts as a chaperone by maintaining the newly synthesized protein in an open conformation. Functions as a peptidyl-prolyl cis-trans isomerase. The protein is Trigger factor of Fusobacterium nucleatum subsp. nucleatum (strain ATCC 25586 / DSM 15643 / BCRC 10681 / CIP 101130 / JCM 8532 / KCTC 2640 / LMG 13131 / VPI 4355).